The following is a 143-amino-acid chain: Ribosome maturation factor RimP (143 aa).

This sequence belongs to the RimP family.

The protein localises to the cytoplasm. In terms of biological role, required for maturation of 30S ribosomal subunits. This Neisseria meningitidis serogroup C (strain 053442) protein is Ribosome maturation factor RimP.